Here is a 156-residue protein sequence, read N- to C-terminus: 6,7-dimethyl-8-ribityllumazine synthase (156 aa).

5-amino-6-(D-ribitylamino)uracil-binding positions include Phe-22, Ala-57–Glu-59, and Thr-81–Ile-83. A (2S)-2-hydroxy-3-oxobutyl phosphate-binding site is contributed by Gly-86–Thr-87. His-89 (proton donor) is an active-site residue. Phe-114 contacts 5-amino-6-(D-ribitylamino)uracil. Arg-128 provides a ligand contact to (2S)-2-hydroxy-3-oxobutyl phosphate.

The protein belongs to the DMRL synthase family. As to quaternary structure, forms an icosahedral capsid composed of 60 subunits, arranged as a dodecamer of pentamers.

The enzyme catalyses (2S)-2-hydroxy-3-oxobutyl phosphate + 5-amino-6-(D-ribitylamino)uracil = 6,7-dimethyl-8-(1-D-ribityl)lumazine + phosphate + 2 H2O + H(+). The protein operates within cofactor biosynthesis; riboflavin biosynthesis; riboflavin from 2-hydroxy-3-oxobutyl phosphate and 5-amino-6-(D-ribitylamino)uracil: step 1/2. Functionally, catalyzes the formation of 6,7-dimethyl-8-ribityllumazine by condensation of 5-amino-6-(D-ribitylamino)uracil with 3,4-dihydroxy-2-butanone 4-phosphate. This is the penultimate step in the biosynthesis of riboflavin. This is 6,7-dimethyl-8-ribityllumazine synthase from Serratia proteamaculans (strain 568).